The sequence spans 198 residues: Recombination protein RecR (198 aa).

The C4-type zinc-finger motif lies at cysteine 57–cysteine 72. Residues serine 80–proline 175 enclose the Toprim domain.

It belongs to the RecR family.

Its function is as follows. May play a role in DNA repair. It seems to be involved in an RecBC-independent recombinational process of DNA repair. It may act with RecF and RecO. This chain is Recombination protein RecR, found in Bacillus cytotoxicus (strain DSM 22905 / CIP 110041 / 391-98 / NVH 391-98).